Consider the following 378-residue polypeptide: MDLAGLLKSQFLCHLVFCYVFIASGLIINTIQLFTLLLWPINKQLFRKINCRLSYCISSQLVMLLEWWSGTECTIFTDPRAYLKYGKENAIVVLNHKFEIDFLCGWSLSERFGLLGGSKVLAKKELAYVPIIGWMWYFTEMVFCSRKWEQDRKTVATSLQHLRDYPEKYFFLIHCEGTRFTEKKHEISMQVARAKGLPRLKHHLLPRTKGFAITVRSLRNVVSAVYDCTLNFRNNENPTLLGVLNGKKYHADLYVRRIPLEDIPEDDDECSAWLHKLYQEKDAFQEEYYRTGTFPETPMVPPRRPWTLVNWLFWASLVLYPFFQFLVSMIRSGSSLTLASFILVFFVASVGVRWMIGVTEIDKGSAYGNSDSKQKLND.

A helical transmembrane segment spans residues 11–31 (FLCHLVFCYVFIASGLIINTI). Residues 96–101 (HKFEID) carry the HXXXXD motif motif. Helical transmembrane passes span 125–145 (ELAYVPIIGWMWYFTEMVFCS), 307–327 (TLVNWLFWASLVLYPFFQFLV), and 338–358 (LASFILVFFVASVGVRWMIGV).

The protein belongs to the 1-acyl-sn-glycerol-3-phosphate acyltransferase family. As to expression, widely expressed with highest levels in skeletal muscle, followed by heart, liver, prostate and thymus.

Its subcellular location is the endoplasmic reticulum membrane. It catalyses the reaction a 1-acyl-sn-glycero-3-phosphate + an acyl-CoA = a 1,2-diacyl-sn-glycero-3-phosphate + CoA. The catalysed reaction is (4Z,7Z,10Z,13Z,16Z,19Z)-docosahexaenoyl-CoA + 1-hexadecanoyl-sn-glycero-3-phosphate = 1-hexadecanoyl-2-(4Z,7Z,10Z,13Z,16Z,19Z-docosahexaenoyl)-sn-glycero-3-phosphate + CoA. The enzyme catalyses 1-octadecanoyl-sn-glycero-3-phosphate + (9Z,12Z)-octadecadienoyl-CoA = 1-octadecanoyl-2-(9Z,12Z-octadecadienoyl)-sn-glycero-3-phosphate + CoA. It carries out the reaction 1-octadecanoyl-sn-glycero-3-phosphate + (4Z,7Z,10Z,13Z,16Z,19Z)-docosahexaenoyl-CoA = 1-octadecanoyl-2-(4Z,7Z,10Z,13Z,16Z,19Z-docosahexaenoyl)-sn-glycero-3-phosphate + CoA. It catalyses the reaction (4Z,7Z,10Z,13Z,16Z,19Z)-docosahexaenoyl-CoA + 1-(9Z-octadecenoyl)-sn-glycero-3-phosphate = 1-(9Z-octadecenoyl)-2-(4Z,7Z,10Z,13Z,16Z,19Z-docosahexaenoyl)-sn-glycero-3-phosphate + CoA. It functions in the pathway phospholipid metabolism; CDP-diacylglycerol biosynthesis; CDP-diacylglycerol from sn-glycerol 3-phosphate: step 2/3. In terms of biological role, converts 1-acyl-sn-glycerol-3-phosphate (lysophosphatidic acid or LPA) into 1,2-diacyl-sn-glycerol-3-phosphate (phosphatidic acid or PA) by incorporating an acyl moiety at the sn-2 position of the glycerol backbone. Exhibits high acyl-CoA specificity for polyunsaturated fatty acyl-CoA, especially docosahexaenoyl-CoA (22:6-CoA, DHA-CoA). This chain is 1-acyl-sn-glycerol-3-phosphate acyltransferase delta (AGPAT4), found in Homo sapiens (Human).